The chain runs to 369 residues: FAD-dependent monooxygenase FPY4 (369 aa).

Belongs to the aromatic-ring hydroxylase family. FAD is required as a cofactor.

It functions in the pathway secondary metabolite biosynthesis. Its function is as follows. FAD-dependent monooxygenase; part of the gene cluster that mediates the biosynthesis of the gamma-pyrones fusapyrone (FPY) and deoxyfusapyrone (dFPY). FPY is an undecaketide and thus likely synthesized by the polyketide synthase FPY1 from acetyl-CoA functioning as starter unit and the addition of 10 malonyl-CoA extender units by successive Claisen-condensations. Next to this, FPY shares some rare features: C-glycosylated 4-deoxyglucose at C-3, a gem-dimethyl group at C-13, and an alpha-beta to beta-gamma double bond shift at C-20. During FPY biosynthesis mono-C-methyl groups are transferred to the tetra-, penta-, hexa- and heptaketide, while two C-methyl groups are transferred to the nonaketide, suggesting that the CMet domain is programmed to selectively catalyze two successive C-alpha-methylation reactions of the nonaketide, while other alpha-carbons are non- or mono-methylated only. While the origin of the 4'-deoxyglucose moiety remains opaque, its transfer to C-3 is most likely mediated by the C-glycosyltransferase FPY2. Next to this, the hydroxyl group present at C-33 and discriminating between FPY and dFPY, is likely to be installed by the cytochrome P450 monooxygenase FPY7. No putative function can be predicted for the remaining genes FPY3-FPY6. This is FAD-dependent monooxygenase FPY4 from Fusarium mangiferae (Mango malformation disease fungus).